Reading from the N-terminus, the 299-residue chain is Hydroxymethylglutaryl-CoA lyase YngG (299 aa).

The region spanning 7–274 (VTIKEVGPRD…KTNVKLEKLL (268 aa)) is the Pyruvate carboxyltransferase domain. Arginine 15 serves as a coordination point for substrate. Residues aspartate 16, histidine 207, and histidine 209 each contribute to the a divalent metal cation site. Cysteine 240 is a catalytic residue. Asparagine 249 contributes to the a divalent metal cation binding site.

This sequence belongs to the HMG-CoA lyase family. As to quaternary structure, homodimer and homotetramer.

It catalyses the reaction (3S)-3-hydroxy-3-methylglutaryl-CoA = acetoacetate + acetyl-CoA. The protein operates within metabolic intermediate metabolism; (S)-3-hydroxy-3-methylglutaryl-CoA degradation; acetoacetate from (S)-3-hydroxy-3-methylglutaryl-CoA: step 1/1. Involved in the catabolism of branched amino acids such as leucine. The protein is Hydroxymethylglutaryl-CoA lyase YngG (yngG) of Bacillus subtilis (strain 168).